Consider the following 214-residue polypeptide: Heat shock protein 26 (214 aa).

Position 2 is an N-acetylserine (serine 2). A Phosphothreonine modification is found at threonine 42. The sHSP domain occupies 86–207 (GFPRSVAVPV…KNHVKKIEVS (122 aa)). Serine 90 carries the phosphoserine modification. Residue threonine 163 is modified to Phosphothreonine. The tract at residues 192-214 (KPQKDGKNHVKKIEVSSQESWGN) is disordered. Positions 193–205 (PQKDGKNHVKKIE) are enriched in basic and acidic residues. Serine 208 and serine 211 each carry phosphoserine.

Belongs to the small heat shock protein (HSP20) family. In terms of assembly, present in large complexes.

Functionally, not known. One of the major polypeptides produced on heat shock. This chain is Heat shock protein 26 (HSP26), found in Saccharomyces cerevisiae (strain ATCC 204508 / S288c) (Baker's yeast).